The sequence spans 157 residues: uncharacterized protein (157 aa).

The 138-residue stretch at 9-146 folds into the N-acetyltransferase domain; sequence LLINYKTLDE…GDFYVWHPET (138 aa).

This is an uncharacterized protein from Bacillus cereus (strain ZK / E33L).